Here is a 128-residue protein sequence, read N- to C-terminus: RYamide neuropeptides (128 aa).

An N-terminal signal peptide occupies residues 1–23 (MHARKLIVVLVYILTVLVSVAVS). The propeptide occupies 26-29 (YTSE). At Tyr-44 the chain carries Tyrosine amide. The propeptide occupies 47–63 (GGPSPNNKENKVNIRPR). Tyr-73 bears the Tyrosine amide mark. Residues 77-128 (SGWSPNASLVYPVSTPLCGLDEDLSCAYTGISDLYRCTPRKGESEEFTTSSN) constitute a propeptide that is removed on maturation.

It localises to the secreted. Functionally, neuropeptides RYamide-1 and RYamide-2 are ligands for the G-protein coupled receptor RYa-R. RYamide-2 is the most potent activator of RYa-R. This is RYamide neuropeptides from Tribolium castaneum (Red flour beetle).